The chain runs to 181 residues: ATP-dependent protease subunit HslV (181 aa).

The active site involves Thr-7. Residues Ala-165, Cys-168, and Thr-171 each coordinate Na(+).

The protein belongs to the peptidase T1B family. HslV subfamily. In terms of assembly, a double ring-shaped homohexamer of HslV is capped on each side by a ring-shaped HslU homohexamer. The assembly of the HslU/HslV complex is dependent on binding of ATP.

It is found in the cytoplasm. It catalyses the reaction ATP-dependent cleavage of peptide bonds with broad specificity.. With respect to regulation, allosterically activated by HslU binding. Protease subunit of a proteasome-like degradation complex believed to be a general protein degrading machinery. In Lysinibacillus sphaericus (strain C3-41), this protein is ATP-dependent protease subunit HslV.